We begin with the raw amino-acid sequence, 393 residues long: MLRYLTAGESHGPQLTAIIEGIPAGLKISEETINVDLARRQGGYGRGGRMLIEKDQVQILSGVRWGETIGSPVTLCVVNRDWVNWQEKMSPHERHRDDKIRVTRSRPGHADLPGAMKYNHRDVRNILERSSARETAMRVAVGSVARAFLASFGVTVSGFVVELGGIKAERRGLSSDRLRELAAKSELATYDPEAEARMKAFIDSVKDAGDTAGGVVEVVVTGAPVGLGSHVQWDRKLDARLAMAVMSIQAIKGVEIGLGFETARRPGSQVHDEIYFDSSRIAHGEATGFFRKTNNAGGIEGGITNGEEIVIRAAMKPIPTLYKPLSSVDMLTKEPFEATVERSDVCAVPAAAVVAESVVAIEIASAFLEKFGGDSLAEIRRNYDGYLDYLRSF.

NADP(+) contacts are provided by arginine 40 and arginine 46. FMN is bound by residues 129–131, 249–250, glycine 301, 316–320, and arginine 342; these read RSS, QA, and KPIPT.

It belongs to the chorismate synthase family. In terms of assembly, homotetramer. The cofactor is FMNH2.

The catalysed reaction is 5-O-(1-carboxyvinyl)-3-phosphoshikimate = chorismate + phosphate. Its pathway is metabolic intermediate biosynthesis; chorismate biosynthesis; chorismate from D-erythrose 4-phosphate and phosphoenolpyruvate: step 7/7. Its function is as follows. Catalyzes the anti-1,4-elimination of the C-3 phosphate and the C-6 proR hydrogen from 5-enolpyruvylshikimate-3-phosphate (EPSP) to yield chorismate, which is the branch point compound that serves as the starting substrate for the three terminal pathways of aromatic amino acid biosynthesis. This reaction introduces a second double bond into the aromatic ring system. This Geobacter metallireducens (strain ATCC 53774 / DSM 7210 / GS-15) protein is Chorismate synthase.